The primary structure comprises 806 residues: DEP domain-containing protein 1A (806 aa).

The DEP domain occupies 24–108 (FRAAMPLRKH…DNNSLYRFPS (85 aa)). Positions 142–177 (QFSKKTPKRRASVDSKEEQENEDLMEDQRNDDDFPK) are disordered. Over residues 167-177 (EDQRNDDDFPK) the composition is skewed to basic and acidic residues. In terms of domain architecture, Rho-GAP spans 279–319 (DYFLNLPEPLLTFEFYELFVNILVVCGYITVPNSHNGKHRF). A disordered region spans residues 564-588 (SHSSFPSTSSLLPPTTSPNSTGSES).

The sequence is that of DEP domain-containing protein 1A (depdc1a) from Xenopus laevis (African clawed frog).